The primary structure comprises 143 residues: MNSLSILNNIEDKVVEAINTAALSLESLSASLDIENTNENFSKFQTQSDKFYNLVKKDIHKGLIDFIDSMTDIAPFDHSSYLKKSELEVSHNFTEIILSHLEDLNNIVENNQEKQEKEKQEKEKLEKEKLEKEKQQSNEMNID.

A coiled-coil region spans residues 97–143 (ILSHLEDLNNIVENNQEKQEKEKQEKEKLEKEKLEKEKQQSNEMNID). The tract at residues 109–143 (ENNQEKQEKEKQEKEKLEKEKLEKEKQQSNEMNID) is disordered. Residues 111–136 (NQEKQEKEKQEKEKLEKEKLEKEKQQ) are compositionally biased toward basic and acidic residues.

It belongs to the Mediator complex subunit 11 family. As to quaternary structure, component of the Mediator complex.

It localises to the nucleus. Functionally, component of the Mediator complex, a coactivator involved in the regulated transcription of nearly all RNA polymerase II-dependent genes. Mediator functions as a bridge to convey information from gene-specific regulatory proteins to the basal RNA polymerase II transcription machinery. Mediator is recruited to promoters by direct interactions with regulatory proteins and serves as a scaffold for the assembly of a functional pre-initiation complex with RNA polymerase II and the general transcription factors. The chain is Putative mediator of RNA polymerase II transcription subunit 11 (med11) from Dictyostelium discoideum (Social amoeba).